A 644-amino-acid polypeptide reads, in one-letter code: Protein cueball (644 aa).

The signal sequence occupies residues 1-26; the sequence is MIRIRFGMDVLLVVLLATCLLTPAHG. Residues 27–531 lie on the Extracellular side of the membrane; sequence TPLEWDFAVT…VCLTPRVWTS (505 aa). N-linked (GlcNAc...) asparagine glycosylation is found at Asn-82 and Asn-108. 3 LDL-receptor class B repeats span residues 121-166, 167-211, and 212-257; these read MNLF…DVCR, RKLY…DQLS, and DRLF…TNDA. Residues Asn-175 and Asn-190 are each glycosylated (N-linked (GlcNAc...) asparagine). Asn-313 is a glycosylation site (N-linked (GlcNAc...) asparagine). EGF-like domains lie at 398–430 and 433–471; these read EIRE…FTGE and ELSV…ARCE. Disulfide bonds link Cys-402/Cys-411, Cys-406/Cys-421, Cys-437/Cys-447, Cys-441/Cys-459, and Cys-461/Cys-470. N-linked (GlcNAc...) asparagine glycosylation is found at Asn-473 and Asn-508. The helical transmembrane segment at 532 to 552 threads the bilayer; it reads SVIIILVVGIVSSLLLVAVIV. The Cytoplasmic portion of the chain corresponds to 553-644; the sequence is HGIRRLYKPK…LIHNMEDDLY (92 aa).

The protein belongs to the cueball family.

It is found in the cell membrane. Has a role in spermatogenesis and oogenesis. The chain is Protein cueball from Drosophila simulans (Fruit fly).